Consider the following 457-residue polypeptide: Choline kinase alpha (457 aa).

The tract at residues 1–86 (MKTKFCTGGE…PPADEQPEPR (86 aa)) is disordered. Residues 13 to 32 (PSPLGLLLSCGSGSAAPAPG) are compositionally biased toward low complexity. Pro residues predominate over residues 55–80 (LALPPPPPLPLPLPLPQPPPPQPPAD). Residues 117–123 (RGGLSNM), arginine 146, and 207–213 (QFIPSRR) each bind ATP. Position 119-121 (119-121 (GLS)) interacts with phosphocholine. Lysine 247 carries the N6-acetyllysine modification. Phosphoserine is present on serine 279. ATP is bound by residues glutamine 308 and aspartate 330.

This sequence belongs to the choline/ethanolamine kinase family. In terms of assembly, homodimer. Heterodimer with CHKB. As to quaternary structure, monomer; acetylation by KAT5 promotes dissociation of the homodimer and monomerization. (Microbial infection) Interacts with PI4KA/PI4KIIIalpha; CHKA bridges PI4KA/PI4KIIIalpha and hepatitis C virus (HCV) non-structural protein 5A (NS5A) and potentiates NS5A-stimulated PI4KA activity, which then facilitates the targeting of the ternary complex to the ER for viral replication. Post-translationally, phosphorylated at Ser-279 by AMPK in response to glucose deprivation, leading to localization to lipid droplets. Acetylated by KAT5 at Lys-247 following phosphorylation by AMPK, leading to monomerization and conversion into a tyrosine-protein kinase.

Its subcellular location is the cytoplasm. The protein localises to the cytosol. The protein resides in the lipid droplet. It catalyses the reaction choline + ATP = phosphocholine + ADP + H(+). The catalysed reaction is ethanolamine + ATP = phosphoethanolamine + ADP + H(+). It carries out the reaction L-tyrosyl-[protein] + ATP = O-phospho-L-tyrosyl-[protein] + ADP + H(+). It functions in the pathway phospholipid metabolism; phosphatidylcholine biosynthesis; phosphocholine from choline: step 1/1. The protein operates within phospholipid metabolism; phosphatidylethanolamine biosynthesis; phosphatidylethanolamine from ethanolamine: step 1/3. Its activity is regulated as follows. Homodimerization or heterodimerization is required for the choline and ethanolamine kinase activities. In terms of biological role, plays a key role in phospholipid biosynthesis by catalyzing the phosphorylation of free choline to phosphocholine, the first step in phosphatidylcholine biosynthesis. Also phosphorylates ethanolamine, thereby contributing to phosphatidylethanolamine biosynthesis. Has higher activity with choline. May contribute to tumor cell growth. Functionally, this isoform plays a key role in lipolysis of lipid droplets following glucose deprivation. In response to glucose deprivation, phosphorylated by AMPK, promoting localization to lipid droplets. Phosphorylation is followed by acetylation by KAT5, leading to dissociation of the homodimer into a monomer. Monomeric CHKA isoform 1 is converted into a tyrosine-protein kinase, which phosphorylates lipid droplet structural proteins PLIN2 and PLIN3, leading to lipolysis of lipid droplets. In Homo sapiens (Human), this protein is Choline kinase alpha (CHKA).